Here is a 204-residue protein sequence, read N- to C-terminus: Proteasome subunit beta type-3 (204 aa).

Belongs to the peptidase T1B family. In terms of assembly, the 26S proteasome consists of a 20S proteasome core and two 19S regulatory subunits. The 20S proteasome core is composed of 28 subunits that are arranged in four stacked rings, resulting in a barrel-shaped structure. The two end rings are each formed by seven alpha subunits, and the two central rings are each formed by seven beta subunits. The catalytic chamber with the active sites is on the inside of the barrel.

The protein localises to the cytoplasm. It is found in the nucleus. Its function is as follows. Non-catalytic component of the proteasome, a multicatalytic proteinase complex which is characterized by its ability to cleave peptides with Arg, Phe, Tyr, Leu, and Glu adjacent to the leaving group at neutral or slightly basic pH. The proteasome has an ATP-dependent proteolytic activity. In Oryza sativa subsp. japonica (Rice), this protein is Proteasome subunit beta type-3 (PBC1).